Reading from the N-terminus, the 238-residue chain is MILDFEESLRAFRKGSPVLIYDFEDREGETDIAIPAIHVGKDEVAMMRIDGGGLICVAIHPVAAEKLGLPFMHDVLRIASEKLPEIRKVADADDIKYDSRSSFSLWVNHRDTFTGITDVDRALTIRRIGEVVDEVMMGKKVDFGREFRSPGHVALLRAADKLTYERVGQTELSVALAEMAGIAPAVAICEMLDAETGKALTKEKAMEYAEEKGIPFIDGRTIVEHYRKFREVEVSLFV.

Residues 26–27 (RE), Asp-31, 166–170 (RVGQT), and Glu-190 contribute to the D-ribulose 5-phosphate site. Glu-27 lines the Mg(2+) pocket.

The protein belongs to the DHBP synthase family. Homodimer. Mg(2+) serves as cofactor. Requires Mn(2+) as cofactor.

The enzyme catalyses D-ribulose 5-phosphate = (2S)-2-hydroxy-3-oxobutyl phosphate + formate + H(+). The protein operates within cofactor biosynthesis; riboflavin biosynthesis; 2-hydroxy-3-oxobutyl phosphate from D-ribulose 5-phosphate: step 1/1. In terms of biological role, catalyzes the conversion of D-ribulose 5-phosphate to formate and 3,4-dihydroxy-2-butanone 4-phosphate. In Archaeoglobus fulgidus (strain ATCC 49558 / DSM 4304 / JCM 9628 / NBRC 100126 / VC-16), this protein is 3,4-dihydroxy-2-butanone 4-phosphate synthase.